The chain runs to 248 residues: 2,3-bisphosphoglycerate-dependent phosphoglycerate mutase (248 aa).

Substrate-binding positions include 8–15 (RHGESVWN), 21–22 (TG), arginine 60, 87–90 (ERHY), lysine 98, 114–115 (RR), and 183–184 (GN). The active-site Tele-phosphohistidine intermediate is the histidine 9. The active-site Proton donor/acceptor is glutamate 87.

It belongs to the phosphoglycerate mutase family. BPG-dependent PGAM subfamily.

It catalyses the reaction (2R)-2-phosphoglycerate = (2R)-3-phosphoglycerate. The protein operates within carbohydrate degradation; glycolysis; pyruvate from D-glyceraldehyde 3-phosphate: step 3/5. Catalyzes the interconversion of 2-phosphoglycerate and 3-phosphoglycerate. The chain is 2,3-bisphosphoglycerate-dependent phosphoglycerate mutase from Brachyspira hyodysenteriae (strain ATCC 49526 / WA1).